The primary structure comprises 339 residues: 2-keto-3-deoxygluconate permease (339 aa).

10 consecutive transmembrane segments (helical) span residues 10–30 (IPGGMMLVPLFLGALCHTFAP), 42–62 (GLISGTVPILAVWFFCMGASI), 77–97 (LVVTKIAVAWVVAAVASRILP), 100–120 (GVEVGFFAGLSTLALVAAMDM), 141–161 (AFVLMSLESGPLMTMVILGTA), 163–183 (IASFEPHVFVGAVLPFLVGFA), 199–219 (VQTLIPFFAFALGNTIDLSVI), 224–244 (LLGVLLGISVIIITGIPLIVA), 254–274 (TAGIAASSSAGAAVATPVLIA), and 289–309 (TLVATSVIVTSVLVPIITAMW). The segment at 315-339 (GGDGTVPKEDAVEEKAEQQRRRIIK) is disordered. The span at 320–339 (VPKEDAVEEKAEQQRRRIIK) shows a compositional bias: basic and acidic residues.

Belongs to the KdgT transporter family.

It is found in the cell inner membrane. The enzyme catalyses 2-dehydro-3-deoxy-D-gluconate(in) + H(+)(in) = 2-dehydro-3-deoxy-D-gluconate(out) + H(+)(out). Its activity is regulated as follows. Uptake is inhibited by the protonophore uncouplers carbonyl cyanide m-chlorophenylhydrazone (CCCP) and 2,4-dinitrophenol, and by NaN(3). Catalyzes the proton-dependent uptake of 2-keto-3-deoxygluconate (KDG) into the cell. Can also mediate the uptake of glucuronate with a low affinity, and may mediate the uptake of 5-keto-4-deoxyuronate (DKI) and 2,5-diketo-3-deoxygluconate (DKII), which are intermediates in pectin degradation. The polypeptide is 2-keto-3-deoxygluconate permease (Dickeya chrysanthemi (Pectobacterium chrysanthemi)).